Reading from the N-terminus, the 304-residue chain is Dihydroorotate dehydrogenase B (NAD(+)), catalytic subunit (304 aa).

FMN-binding positions include Ser22 and 46–47; that span reads KG. Substrate is bound by residues Lys46 and 70–74; that span reads NAIGL. Residues Asn100 and Asn128 each contribute to the FMN site. Asn128 is a binding site for substrate. Residue Cys131 is the Nucleophile of the active site. Lys166 and Ile192 together coordinate FMN. 193–194 serves as a coordination point for substrate; sequence NT. FMN is bound by residues Gly218, 244 to 245, and 266 to 267; these read GG and GT.

The protein belongs to the dihydroorotate dehydrogenase family. Type 1 subfamily. In terms of assembly, heterotetramer of 2 PyrK and 2 PyrD type B subunits. FMN serves as cofactor.

It localises to the cytoplasm. The catalysed reaction is (S)-dihydroorotate + NAD(+) = orotate + NADH + H(+). It participates in pyrimidine metabolism; UMP biosynthesis via de novo pathway; orotate from (S)-dihydroorotate (NAD(+) route): step 1/1. In terms of biological role, catalyzes the conversion of dihydroorotate to orotate with NAD(+) as electron acceptor. The protein is Dihydroorotate dehydrogenase B (NAD(+)), catalytic subunit (pyrD) of Trichlorobacter lovleyi (strain ATCC BAA-1151 / DSM 17278 / SZ) (Geobacter lovleyi).